Consider the following 89-residue polypeptide: Large ribosomal subunit protein bL27 (89 aa).

The segment at 1-22 is disordered; the sequence is MAHKKAGGSSRNGRDSESKRLG.

The protein belongs to the bacterial ribosomal protein bL27 family.

The polypeptide is Large ribosomal subunit protein bL27 (Bartonella tribocorum (strain CIP 105476 / IBS 506)).